Here is a 610-residue protein sequence, read N- to C-terminus: Menin (610 aa).

The interaction with FANCD2 stretch occupies residues 214 to 390 (GVAERSWLYL…SLLEAGEERP (177 aa)). Residues 462 to 552 (AEAAEAEELW…SPPPEGPVLT (91 aa)) form a disordered region. Residues 484–500 (RRESKPEEPPPPKKPAL) show a composition bias toward basic and acidic residues. Residues Ser487 and Ser543 each carry the phosphoserine modification. The segment covering 537-548 (APAPAASPPPEG) has biased composition (pro residues). Residue Thr594 is modified to Phosphothreonine.

Component of the MLL-HCF complex, at least composed of KMT2A/MLL1, MEN1, ASH2L, RBBP5, DPY30, WDR5, HCFC1 and HCFC2. Component of the menin-associated histone methyltransferase complex, at least composed of KMT2B/MLL4, MEN1, ASH2L, RBBP5, DPY30 and WDR5. Interacts with POLR2B. Interacts with POLR2A phosphorylated at 'Ser-5', but not with the unphosphorylated, nor 'Ser-2' phosphorylated POLR2A forms. Interacts with FANCD2 and DBF4. Interacts with SMAD3, but not with SMAD2, nor SMAD4. Directly interacts with NFKB1, NFKB2 and RELA. Interacts with JUND (via MBM motif); inhibits the interaction of JUND with MAPK10 and the phosphorylation of JUND by MAP kinases MAPK8 and MAPK10. Interacts with KMT2A (via MBM motif). The KMT2A-MEN1 complex interacts with PSIP1 with a greater affinity as MEN1 enhances interaction of KMT2A with PSIP1.

The protein resides in the nucleus. Its function is as follows. Essential component of a MLL/SET1 histone methyltransferase (HMT) complex, a complex that specifically methylates 'Lys-4' of histone H3 (H3K4). Functions as a transcriptional regulator. Binds to the TERT promoter and represses telomerase expression. Plays a role in TGFB1-mediated inhibition of cell-proliferation, possibly regulating SMAD3 transcriptional activity. Represses JUND-mediated transcriptional activation on AP1 sites, as well as that mediated by NFKB subunit RELA. Positively regulates HOXC8 and HOXC6 gene expression. May be involved in normal hematopoiesis through the activation of HOXA9 expression. May be involved in DNA repair. This Canis lupus familiaris (Dog) protein is Menin (MEN1).